The primary structure comprises 3019 residues: Genome polyprotein (3019 aa).

At Ser2 the chain carries N-acetylserine; by host. An interaction with STAT1 region spans residues 2–23 (STLPKPQRKTKRNTNRRPMDVK). The tract at residues 2 to 58 (STLPKPQRKTKRNTNRRPMDVKFPGGGQIVGGVYLLPRRGPRLGVRATRKTSERSQP) is interaction with EIF2AK2/PKR. The segment at 2-59 (STLPKPQRKTKRNTNRRPMDVKFPGGGQIVGGVYLLPRRGPRLGVRATRKTSERSQPR) is interaction with DDX3X. Positions 2–75 (STLPKPQRKT…PKARQPQGRH (74 aa)) are disordered. The Cytoplasmic portion of the chain corresponds to 2 to 168 (STLPKPQRKT…EDGINYATGN (167 aa)). Short sequence motifs (nuclear localization signal) lie at residues 5–13 (PKPQRKTKR) and 38–43 (PRRGPR). Residues 7–16 (PQRKTKRNTN) are compositionally biased toward basic residues. The span at 32–47 (GGVYLLPRRGPRLGVR) shows a compositional bias: low complexity. Ser53 bears the Phosphoserine; by host mark. 2 consecutive short sequence motifs (nuclear localization signal) follow at residues 58-64 (PRGRRQP) and 66-71 (PKARQP). Position 99 is a phosphoserine; by host (Ser99). An important for endoplasmic reticulum and mitochondrial localization region spans residues 112 to 152 (PRRRSRNLGKVIDTLTCGFADLMGYIPVVGAPLGGVAAALA). Phosphoserine; by host PKA is present on Ser116. The interval 122-173 (VIDTLTCGFADLMGYIPVVGAPLGGVAAALAHGVRAIEDGINYATGNLPGCS) is interaction with APOA2. The tract at residues 164 to 167 (YATG) is important for lipid droplets localization. The helical transmembrane segment at 169–189 (LPGCSFSIFLLALLSCLTTPA) threads the bilayer. A propeptide spans 178–191 (LLALLSCLTTPASA) (ER anchor for the core protein, removed in mature form by host signal peptidase). The Lumenal portion of the chain corresponds to 190 to 358 (SALTYGNSSG…FGGHWGILLA (169 aa)). 4 N-linked (GlcNAc...) asparagine; by host glycosylation sites follow: Asn196, Asn209, Asn234, and Asn250. Positions 265–296 (LAGAAVVCSSLYIGDLCGSLFLAGQLFTFQPR) are important for fusion. Residue Asn305 is glycosylated (N-linked (GlcNAc...) asparagine; by host). Residues 359–379 (VAYFGMAGNWLKVLAVLFLFA) form a helical membrane-spanning segment. The Lumenal segment spans residues 380-730 (GVEATTTVGH…WEYIVLMFLV (351 aa)). The segment at 385–411 (TTVGHGVARTTAGITGLFSPGASQNLQ) is HVR1. N-linked (GlcNAc...) asparagine; by host glycosylation occurs at Asn415. Asn422 and Asn429 each carry an N-linked (GlcNAc...) (high mannose) asparagine; by host glycan. Cystine bridges form between Cys428/Cys553, Cys451/Cys458, Cys487/Cys495, and Cys504/Cys509. The N-linked (GlcNAc...) asparagine; by host glycan is linked to Asn447. Residues 474 to 479 (KVNISG) are HVR2. Asn476 is a glycosylation site (N-linked (GlcNAc...) asparagine; by host). Residues 481 to 494 (SDDRPYCWHYAPRP) form a CD81-binding 1 region. The N-linked (GlcNAc...) asparagine; by host glycan is linked to Asn533. The CD81-binding 2 stretch occupies residues 545–552 (PPTGGWFG). Residue Asn557 is glycosylated (N-linked (GlcNAc...) asparagine; by host). Cys565 and Cys570 are joined by a disulfide. Asn578 is a glycosylation site (N-linked (GlcNAc...) asparagine; by host). Intrachain disulfides connect Cys586–Cys590, Cys602–Cys625, and Cys612–Cys649. 2 N-linked (GlcNAc...) (high mannose) asparagine; by host glycosylation sites follow: Asn628 and Asn650. A disulfide bond links Cys657 and Cys682. The segment at 665–676 (IEMSPLLFSTTQ) is PKR/eIF2-alpha phosphorylation homology domain (PePHD). The chain crosses the membrane as a helical span at residues 731 to 751 (LADARICTCLWLMLLISNVEA). At 752–762 (AVERLVVLNAA) the chain is on the lumenal side. Residues 763 to 783 (SAAGTAGWWWAVLFLCCVWYV) traverse the membrane as a helical segment. Topologically, residues 784 to 786 (KGR) are cytoplasmic. A helical transmembrane segment spans residues 787–808 (LVPACTYMALGMWPLLLTILAL). At 809–818 (PHRAYAMDNE) the chain is on the lumenal side. A helical membrane pass occupies residues 819 to 839 (QAASLGAVGLLAITIFTITPT). At 840–843 (YKKL) the chain is on the cytoplasmic side. The helical transmembrane segment at 844-863 (LTCFIWWNQYFLARAEAMVH) threads the bilayer. The Lumenal segment spans residues 864–886 (EWVPDLRVRGGRDSIILLTCLLH). The helical transmembrane segment at 887 to 907 (PQLGFEVTKILLAILAPLYIL) threads the bilayer. Positions 908–1031 (QYSLLKVPYF…DMQRGGWKLL (124 aa)) constitute a Peptidase C18 domain. The Cytoplasmic portion of the chain corresponds to 908–1662 (QYSLLKVPYF…CMSADLEVIT (755 aa)). The interval 909 to 1211 (YSLLKVPYFV…PVENMETTMR (303 aa)) is protease NS2-3. A lipid anchor (S-palmitoyl cysteine; by host) is attached at Cys927. Residues 934–954 (AGGRYVQACLLRLGAWTGTFI) form an interaction with host SCPS1 region. Active-site for protease NS2 activity; shared with dimeric partner residues include His957, Glu977, and Cys998. The Peptidase S29 domain maps to 1032-1213 (APITAYAQQT…ENMETTMRSP (182 aa)). Catalysis depends on charge relay system; for serine protease NS3 activity residues His1088 and Asp1112. Zn(2+) is bound by residues Cys1128 and Cys1130. The active-site Charge relay system; for serine protease NS3 activity is Ser1170. Zn(2+) is bound by residues Cys1176 and His1180. The Helicase ATP-binding domain occupies 1222–1374 (PAVPQTYQVG…PNITETALPT (153 aa)). 1235–1242 (APTGSGKS) contributes to the ATP binding site. Ser1242 and Glu1322 together coordinate Mg(2+). Positions 1321 to 1324 (DECH) match the DECH box motif. Residues 1491 to 1503 (QRRGRTGRGKPGV) form an RNA-binding region. A helical membrane pass occupies residues 1663-1683 (STWVLVGGVLAALAAYCLSVG). The segment at 1684–1695 (CVVICGRITLTG) is NS3-binding. Residues 1684-1810 (CVVICGRITL…SLTSPLRTSQ (127 aa)) lie on the Cytoplasmic side of the membrane. A helical transmembrane segment spans residues 1811–1829 (TLLLNILGGWIAAQVAPPP). Topologically, residues 1830 to 1833 (ASTA) are lumenal. Residues 1834–1854 (FVVSGLAGAAVGSIRLGRVLV) form a helical membrane-spanning segment. A topological domain (cytoplasmic) is located at residue Asp1855. The helical transmembrane segment at 1856-1876 (VLAGYGAGVSGALVAFKIMSG) threads the bilayer. Residues 1877–1886 (DCPTTEDMVN) are Lumenal-facing. Residues 1887-1907 (LLPALLSPGALVVGVVCAAIL) traverse the membrane as a helical segment. The Cytoplasmic segment spans residues 1908-1977 (RRHVGPAEGA…WVNEDTATPC (70 aa)). Cys1977 carries S-palmitoyl cysteine; by host lipidation. An intramembrane segment occupies 1978 to 2007 (ATSWLRDVWDWVCTVLSDFKVWLQAKLFPR). Over 2008–2998 (LPGIPFLSCQ…YHSVSQARPR (991 aa)) the chain is Cytoplasmic. Zn(2+) is bound by residues Cys2016, Cys2034, Cys2036, and Cys2057. The FKBP8-binding stretch occupies residues 2125 to 2213 (EFFTEVDGVR…ASSSASQLSA (89 aa)). Residues 2125–2338 (EFFTEVDGVR…PIPPPRRKRL (214 aa)) are transcriptional activation. Positions 2140 to 2144 (PPCKP) are interaction with non-structural protein 4A. Residues 2189 to 2223 (ETASRRLKRGSPPSLASSSASQLSAPSLKATCTTS) are disordered. The segment at 2194-2446 (RLKRGSPPSL…ALITPCAAEE (253 aa)) is interaction with host SKP2. Ser2199 is subject to Phosphoserine; by host; in p56. Positions 2199 to 2216 (SPPSLASSSASQLSAPSL) are enriched in low complexity. Phosphoserine; by host; in p58 occurs at positions 2202, 2206, 2209, 2212, and 2215. Positions 2215–2254 (SLKATCTTSKDHPDMELIEANLLWRQEMGGNITRVESENK) are ISDR. The segment at 2215 to 2280 (SLKATCTTSK…REISVSAECH (66 aa)) is interaction with EIF2AK2/PKR. Residues 2254 to 2312 (KVVVLDSFEPLTAEYDEREISVSAECHRPPRHKFPPALPIWARPDYNPPLLQAWQMPGY) form an NS4B-binding region. The segment at 2305–2383 (QAWQMPGYEP…SITSPDPPAP (79 aa)) is V3. The SH3-binding motif lies at 2328 to 2331 (APIP). Positions 2333 to 2341 (PRRKRLVHL) match the Nuclear localization signal motif. Lys2356 is covalently cross-linked (Glycyl lysine isopeptide (Lys-Gly) (interchain with G-Cter in ubiquitin)). Residues 2359 to 2418 (VEGSSDPGPSSDSGLSITSPDPPAPTTPDDACSEAESYSSMPPLEGEPGDPDLSSGSWST) form a disordered region. Residues 2361-2372 (GSSDPGPSSDSG) show a composition bias toward low complexity. Phosphoserine; by host is present on residues Ser2457 and Ser2470. Positions 2642–2760 (PMGFSYDTRC…ICESAGVQED (119 aa)) constitute a RdRp catalytic domain. Mg(2+) is bound by residues Asp2648, Asp2746, and Asp2747. The chain crosses the membrane as a helical span at residues 2999–3019 (LLLLGLLLLTVGVGIFLVPAR).

This sequence belongs to the hepacivirus polyprotein family. In terms of assembly, homooligomer. Interacts with E1 (via C-terminus). Interacts with the non-structural protein 5A. Interacts (via N-terminus) with host STAT1 (via SH2 domain); this interaction results in decreased STAT1 phosphorylation and ubiquitin-mediated proteasome-dependent STAT1 degradation, leading to decreased IFN-stimulated gene transcription. Interacts with host STAT3; this interaction constitutively activates STAT3. Interacts with host LTBR receptor. Interacts with host TNFRSF1A receptor and possibly induces apoptosis. Interacts with host HNRPK. Interacts with host YWHAE. Interacts with host UBE3A/E6AP. Interacts with host DDX3X. Interacts with host APOA2. Interacts with host RXRA protein. Interacts with host SP110 isoform 3/Sp110b; this interaction sequesters the transcriptional corepressor SP110 away from the nucleus. Interacts with host CREB3 nuclear transcription protein; this interaction triggers cell transformation. Interacts with host ACY3. Interacts with host C1QR1. Interacts with host RBM24; this interaction, which enhances the interaction of the mature core protein with 5'-UTR, may inhibit viral translation and favor replication. Interacts with host EIF2AK2/PKR; this interaction induces the autophosphorylation of EIF2AK2. Part of the viral assembly initiation complex composed of NS2, E1, E2, NS3, NS4A, NS5A and the mature core protein. Forms a heterodimer with envelope glycoprotein E2. Interacts with mature core protein. Interacts with protease NS2. The heterodimer E1/E2 interacts with host CLDN1; this interaction plays a role in viral entry into host cell. Interacts with host SPSB2 (via C-terminus). Part of the viral assembly initiation complex composed of NS2, E1, E2, NS3, NS4A, NS5A and the mature core protein. Interacts with host NEURL3; this interaction prevents E1 binding to glycoprotein E2. As to quaternary structure, forms a heterodimer with envelope glycoprotein E1. Interacts with host CD81 and SCARB1 receptors; these interactions play a role in viral entry into host cell. Interacts with host EIF2AK2/PKR; this interaction inhibits EIF2AK2 and probably allows the virus to evade the innate immune response. Interacts with host CD209/DC-SIGN and CLEC4M/DC-SIGNR. Interact with host SPCS1; this interaction is essential for viral particle assembly. Interacts with protease NS2. The heterodimer E1/E2 interacts with host CLDN1; this interaction plays a role in viral entry into host cell. Part of the viral assembly initiation complex composed of NS2, E1, E2, NS3, NS4A, NS5A and the mature core protein. Interacts with host SLC3A2/4F2hc; the interaction may facilitate viral entry into host cell. Interacts with human PLSCR1. In terms of assembly, homohexamer. Homoheptamer. Interacts with protease NS2. Homodimer. Interacts with host SPCS1; this interaction is essential for viral particle assembly. Interacts with envelope glycoprotein E1. Interacts with envelope glycoprotein E2. Interacts with viroporin p7. Interacts with serine protease/helicase NS3. Part of the replication complex composed of NS2, NS3, NS4A, NS4B, NS5A and the RNA-directed RNA polymerase embedded in an ER-derived membranous web. Part of the viral assembly initiation complex composed of NS2, E1, E2, NS3, NS4A, NS5A and the mature core protein. As to quaternary structure, interacts with protease NS2. Interacts with non-structural protein 4A; this interaction stabilizes the folding of NS3 serine protease. NS3-NS4A interaction is essential for NS3 activation and allows membrane anchorage of the latter. NS3/NS4A complex also prevents phosphorylation of host IRF3, thus preventing the establishment of dsRNA induced antiviral state. Interacts with host MAVS; this interaction leads to the cleavage and inhibition of host MAVS. Interacts with host TICAM1; this interaction leads to the cleavage and inhibition of host TICAM1. Interacts with host TANK-binding kinase/TBK1; this interaction results in the inhibition of the association between TBK1 and IRF3, which leads to the inhibition of IRF3 activation. Interacts with host RBM24. Part of the replication complex composed of NS2, NS3, NS4A, NS4B, NS5A and the RNA-directed RNA polymerase embedded in an ER-derived membranous web. Part of the viral assembly initiation complex composed of NS2, E1, E2, NS3, NS4A, NS5A and the mature core protein. In terms of assembly, interacts with NS3 serine protease; this interaction stabilizes the folding of NS3 serine protease. NS3-NS4A interaction is essential for NS3 activation and allows membrane anchorage of the latter. Interacts with non-structural protein 5A (via N-terminus). Part of the replication complex composed of NS2, NS3, NS4A, NS4B, NS5A and the RNA-directed RNA polymerase embedded in an ER-derived membranous web. Part of the viral assembly initiation complex composed of NS2, E1, E2, NS3, NS4A, NS5A and the mature core protein. Homomultimer. Interacts with non-structural protein NS5A. Interacts with host PLA2G4C; this interaction likely initiates the recruitment of replication complexes to lipid droplets. Interacts with host STING; this interaction disrupts the interaction between STING and TBK1 thereby suppressing the interferon signaling. Part of the replication complex composed of NS2, NS3, NS4A, NS4B, NS5A and the RNA-directed RNA polymerase embedded in an ER-derived membranous web. As to quaternary structure, monomer. Homodimer; dimerization is required for RNA-binding. Interacts with the mature core protein. Interacts (via N-terminus) with non-structural protein 4A. Interacts with non-structural protein 4B. Interacts (via region D2) with RNA-directed RNA polymerase. Part of the viral assembly initiation complex composed of NS2, E1, E2, NS3, NS4A, NS5A and the mature core protein. Part of the replication complex composed of NS2, NS3, NS4A, NS4B, NS5A and the RNA-directed RNA polymerase embedded in an ER-derived membranous web. Interacts with host GRB2. Interacts with host BIN1. Interacts with host PIK3R1. Interacts with host SRCAP. Interacts with host FKBP8. Interacts (via C-terminus) with host VAPB (via MSP domain). Interacts with host EIF2AK2/PKR; this interaction leads to disruption of EIF2AK2 dimerization by NS5A and probably allows the virus to evade the innate immune response. Interacts (via N-terminus) with host PACSIN2 (via N-terminus); this interaction attenuates protein kinase C alpha-mediated phosphorylation of PACSIN2 by disrupting the interaction between PACSIN2 and PRKCA. Interacts (via N-terminus) with host SRC kinase (via SH2 domain). Interacts with most Src-family kinases. Interacts with host IFI27 and SKP2; promotes the ubiquitin-mediated proteasomal degradation of NS5A. Interacts with host GPS2. Interacts with host TNFRSF21; this interaction allows the modulation by the virus of JNK, p38 MAPK, STAT3, and Akt signaling pathways in a DR6-dependent manner. Interacts (via N-terminus) with host CIDEB (via N-terminus); this interaction seems to regulate the association of HCV particles with APOE. Interacts with host CHKA/Choline Kinase-alpha; CHKA bridges host PI4KA and NS5A and potentiates NS5A-stimulated PI4KA activity, which then facilitates the targeting of the ternary complex to the ER for viral replication. Interacts with host SPSB2 (via C-terminus); this interaction targets NS5A for ubiquitination and degradation. Interacts with host RAB18; this interaction may promote the association of NS5A and other replicase components with lipid droplets. Interacts (via region D2) with host PPIA/CYPA; the interaction stimulates RNA-binding ability of NS5A and is dependent on the peptidyl-prolyl cis-trans isomerase activity of PPIA/CYPA. Interacts with host TRIM14; this interaction induces the degradation of NS5A. In terms of assembly, homooligomer. Interacts with non-structural protein 5A. Interacts with host VAPB. Interacts with host PRK2/PKN2. Interacts with host HNRNPA1 and SEPT6; these interactions facilitate viral replication. Part of the replication complex composed of NS2, NS3, NS4A, NS4B, NS5A and the RNA-directed RNA polymerase. The cofactor is Zn(2+). Mg(2+) serves as cofactor. Post-translationally, specific enzymatic cleavages in vivo yield mature proteins. The structural proteins, core, E1, E2 and p7 are produced by proteolytic processing by host signal peptidases. The core protein precursor is synthesized as a 23 kDa, which is retained in the ER membrane through the hydrophobic signal peptide. Cleavage by the signal peptidase releases the 21 kDa mature core protein. The cleavage of the core protein precursor occurs between aminoacids 176 and 188 but the exact cleavage site is not known. Some degraded forms of the core protein appear as well during the course of infection. The other proteins (p7, NS2, NS3, NS4A, NS4B, NS5A and NS5B) are cleaved by the viral proteases. Autoprocessing between NS2 and NS3 is mediated by the NS2 cysteine protease catalytic domain and regulated by the NS3 N-terminal domain. Phosphorylated by host PKC and PKA. In terms of processing, ubiquitinated; mediated by UBE3A and leading to core protein subsequent proteasomal degradation. Post-translationally, highly N-glycosylated. Palmitoylation is required for NS2/3 autoprocessing and E2 recruitment to membranes. In terms of processing, palmitoylated. This modification may play a role in its polymerization or in protein-protein interactions. Post-translationally, phosphorylated on serines in a basal form termed p56. p58 is a hyperphosphorylated form of p56. p56 and p58 coexist in the cell in roughly equivalent amounts. Hyperphosphorylation is dependent on the presence of NS4A. Host CSNK1A1/CKI-alpha or RPS6KB1 kinases may be responsible for NS5A phosphorylation. Tyrosine phosphorylation is essential for the interaction with host SRC. In terms of processing, the N-terminus is phosphorylated by host PRK2/PKN2.

The protein resides in the host endoplasmic reticulum membrane. The protein localises to the host mitochondrion membrane. It is found in the virion. It localises to the host cytoplasm. Its subcellular location is the host nucleus. The protein resides in the host lipid droplet. The protein localises to the virion membrane. It is found in the host mitochondrion. It localises to the host cell membrane. Its subcellular location is the host perinuclear region. The enzyme catalyses Hydrolysis of four peptide bonds in the viral precursor polyprotein, commonly with Asp or Glu in the P6 position, Cys or Thr in P1 and Ser or Ala in P1'.. It catalyses the reaction a ribonucleoside 5'-triphosphate + H2O = a ribonucleoside 5'-diphosphate + phosphate + H(+). The catalysed reaction is ATP + H2O = ADP + phosphate + H(+). It carries out the reaction RNA(n) + a ribonucleoside 5'-triphosphate = RNA(n+1) + diphosphate. With respect to regulation, inhibited by the antiviral drug hexamethylene amiloride. Inhibition by amantadine appears to be genotype-dependent. Also inhibited by long-alkyl-chain iminosugar derivatives. Activity is up-regulated by PRK2/PKN2-mediated phosphorylation. Functionally, packages viral RNA to form a viral nucleocapsid, and promotes virion budding. Participates in the viral particle production as a result of its interaction with the non-structural protein 5A. Binds RNA and may function as a RNA chaperone to induce the RNA structural rearrangements taking place during virus replication. Modulates viral translation initiation by interacting with viral IRES and 40S ribosomal subunit. Affects various cell signaling pathways, host immunity and lipid metabolism. Prevents the establishment of cellular antiviral state by blocking the interferon-alpha/beta (IFN-alpha/beta) and IFN-gamma signaling pathways and by blocking the formation of phosphorylated STAT1 and promoting ubiquitin-mediated proteasome-dependent degradation of STAT1. Activates STAT3 leading to cellular transformation. Regulates the activity of cellular genes, including c-myc and c-fos. May repress the promoter of p53, and sequester CREB3 and SP110 isoform 3/Sp110b in the cytoplasm. Represses cell cycle negative regulating factor CDKN1A, thereby interrupting an important check point of normal cell cycle regulation. Targets transcription factors involved in the regulation of inflammatory responses and in the immune response: suppresses TNF-induced NF-kappa-B activation, and activates AP-1. Binds to dendritic cells (DCs) via C1QR1, resulting in down-regulation of T-lymphocytes proliferation. Alters lipid metabolism by interacting with hepatocellular proteins involved in lipid accumulation and storage. Induces up-regulation of FAS promoter activity, and thereby contributes to the increased triglyceride accumulation in hepatocytes (steatosis). In terms of biological role, forms a heterodimer with envelope glycoprotein E2, which mediates virus attachment to the host cell, virion internalization through clathrin-dependent endocytosis and fusion with host membrane. Fusion with the host cell is most likely mediated by both E1 and E2, through conformational rearrangements of the heterodimer required for fusion rather than a classical class II fusion mechanism. E1/E2 heterodimer binds host apolipoproteins such as APOB and ApoE thereby forming a lipo-viro-particle (LVP). APOE associated to the LVP allows the initial virus attachment to cell surface receptors such as the heparan sulfate proteoglycans (HSPGs), syndecan-1 (SDC1), syndecan-1 (SDC2), the low-density lipoprotein receptor (LDLR) and scavenger receptor class B type I (SCARB1). The cholesterol transfer activity of SCARB1 allows E2 exposure and binding of E2 to SCARB1 and the tetraspanin CD81. E1/E2 heterodimer binding on CD81 activates the epithelial growth factor receptor (EGFR) signaling pathway. Diffusion of the complex E1-E2-EGFR-SCARB1-CD81 to the cell lateral membrane allows further interaction with Claudin 1 (CLDN1) and occludin (OCLN) to finally trigger HCV entry. Its function is as follows. Forms a heterodimer with envelope glycoprotein E1, which mediates virus attachment to the host cell, virion internalization through clathrin-dependent endocytosis and fusion with host membrane. Fusion with the host cell is most likely mediated by both E1 and E2, through conformational rearrangements of the heterodimer required for fusion rather than a classical class II fusion mechanism. The interaction between envelope glycoprotein E2 and host apolipoprotein E/APOE allows the proper assembly, maturation and infectivity of the viral particles. This interaction is probably promoted via the up-regulation of cellular autophagy by the virus. E1/E2 heterodimer binds host apolipoproteins such as APOB and APOE thereby forming a lipo-viro-particle (LVP). APOE associated to the LVP allows the initial virus attachment to cell surface receptors such as the heparan sulfate proteoglycans (HSPGs), syndecan-1 (SDC1), syndecan-1 (SDC2), the low-density lipoprotein receptor (LDLR) and scavenger receptor class B type I (SCARB1). The cholesterol transfer activity of SCARB1 allows E2 exposure and binding of E2 to SCARB1 and the tetraspanin CD81. E1/E2 heterodimer binding on CD81 activates the epithelial growth factor receptor (EGFR) signaling pathway. Diffusion of the complex E1-E2-EGFR-SCARB1-CD81 to the cell lateral membrane allows further interaction with Claudin 1 (CLDN1) and occludin (OCLN) to finally trigger HCV entry. Inhibits host EIF2AK2/PKR activation, preventing the establishment of an antiviral state. Viral ligand for CD209/DC-SIGN and CLEC4M/DC-SIGNR, which are respectively found on dendritic cells (DCs), and on liver sinusoidal endothelial cells and macrophage-like cells of lymph node sinuses. These interactions allow the capture of circulating HCV particles by these cells and subsequent facilitated transmission to permissive cells such as hepatocytes and lymphocyte subpopulations. The interaction between E2 and host amino acid transporter complex formed by SLC3A2 and SLC7A5/LAT1 may facilitate viral entry into host cell. Ion channel protein that acts as a viroporin and plays an essential role in the assembly, envelopment and secretion of viral particles. Regulates the host cell secretory pathway, which induces the intracellular retention of viral glycoproteins and favors assembly of viral particles. Creates a pore in acidic organelles and releases Ca(2+) and H(+) in the cytoplasm of infected cells, leading to a productive viral infection. High levels of cytoplasmic Ca(2+) may trigger membrane trafficking and transport of viral ER-associated proteins to viroplasms, sites of viral genome replication. This ionic imbalance induces the assembly of the inflammasome complex, which triggers the maturation of pro-IL-1beta into IL-1beta through the action of caspase-1. Targets also host mitochondria and induces mitochondrial depolarization. In addition of its role as a viroporin, acts as a lipid raft adhesion factor. Functionally, cysteine protease required for the proteolytic auto-cleavage between the non-structural proteins NS2 and NS3. The N-terminus of NS3 is required for the function of NS2 protease (active region NS2-3). Promotes the initiation of viral particle assembly by mediating the interaction between structural and non-structural proteins. In terms of biological role, displays three enzymatic activities: serine protease with a chymotrypsin-like fold, NTPase and RNA helicase. NS3 serine protease, in association with NS4A, is responsible for the cleavages of NS3-NS4A, NS4A-NS4B, NS4B-NS5A and NS5A-NS5B. The NS3/NS4A complex prevents phosphorylation of host IRF3, thus preventing the establishment of dsRNA induced antiviral state. The NS3/NS4A complex induces host amino acid transporter component SLC3A2, thus contributing to HCV propagation. NS3 RNA helicase binds to RNA and unwinds both dsDNA and dsRNA in the 3' to 5' direction, and likely resolves RNA complicated stable secondary structures in the template strand. Binds a single ATP and catalyzes the unzipping of a single base pair of dsRNA. Inhibits host antiviral proteins TBK1 and IRF3 thereby preventing the establishment of an antiviral state. Cleaves host MAVS/CARDIF thereby preventing the establishment of an antiviral state. Cleaves host TICAM1/TRIF, thereby disrupting TLR3 signaling and preventing the establishment of an antiviral state. Its function is as follows. Induces a specific membrane alteration that serves as a scaffold for the virus replication complex. This membrane alteration gives rise to the so-called ER-derived membranous web that contains the replication complex. NS4B self-interaction contributes to its function in membranous web formation. Promotes host TRIF protein degradation in a CASP8-dependent manner thereby inhibiting host TLR3-mediated interferon signaling. Disrupts the interaction between STING and TBK1 contributing to the inhibition of interferon signaling. Phosphorylated protein that is indispensable for viral replication and assembly. Both hypo- and hyperphosphorylated states are required for the viral life cycle. The hyperphosphorylated form of NS5A is an inhibitor of viral replication. Involved in RNA-binding and especially in binding to the viral genome. Zinc is essential for RNA-binding. Participates in the viral particle production as a result of its interaction with the mature viral core protein. Its interaction with host VAPB may target the viral replication complex to vesicles. Down-regulates viral IRES translation initiation. Mediates interferon resistance, presumably by interacting with and inhibiting host EIF2AK2/PKR. Prevents BIN1-induced apoptosis. Acts as a transcriptional activator of some host genes important for viral replication when localized in the nucleus. Via the interaction with host PACSIN2, modulates lipid droplet formation in order to promote virion assembly. Modulates TNFRSF21/DR6 signaling pathway for viral propagation. Functionally, RNA-dependent RNA polymerase that performs primer-template recognition and RNA synthesis during viral replication. Initiates RNA transcription/replication at a flavin adenine dinucleotide (FAD), resulting in a 5'- FAD cap on viral RNAs. In this way, recognition of viral 5' RNA by host pattern recognition receptors can be bypassed, thereby evading activation of antiviral pathways. The polypeptide is Genome polyprotein (Hepatitis C virus genotype 6a (isolate 6a33) (HCV)).